The sequence spans 406 residues: Peptidase T (406 aa).

His82 contacts Zn(2+). Asp84 is an active-site residue. Residue Asp142 participates in Zn(2+) binding. Residue Glu176 is the Proton acceptor of the active site. Residues Glu177, Asp199, and His381 each coordinate Zn(2+).

It belongs to the peptidase M20B family. It depends on Zn(2+) as a cofactor.

It localises to the cytoplasm. The catalysed reaction is Release of the N-terminal residue from a tripeptide.. Cleaves the N-terminal amino acid of tripeptides. The chain is Peptidase T from Streptococcus agalactiae serotype Ia (strain ATCC 27591 / A909 / CDC SS700).